We begin with the raw amino-acid sequence, 360 residues long: Phospho-N-acetylmuramoyl-pentapeptide-transferase (360 aa).

Transmembrane regions (helical) follow at residues 27-47 (ILSI…LIAW), 73-93 (TMGG…WADL), 94-114 (TNPY…VGFV), 132-152 (WKYF…YAYG), 168-188 (VMPQ…VGTS), 199-219 (GLAI…AWAT), 236-256 (ASEL…FLWF), 263-283 (VFMG…IAVL), 288-308 (FLLV…ILQV), and 338-358 (VIVR…ATLK).

Belongs to the glycosyltransferase 4 family. MraY subfamily. Requires Mg(2+) as cofactor.

The protein localises to the cell inner membrane. The enzyme catalyses UDP-N-acetyl-alpha-D-muramoyl-L-alanyl-gamma-D-glutamyl-meso-2,6-diaminopimeloyl-D-alanyl-D-alanine + di-trans,octa-cis-undecaprenyl phosphate = di-trans,octa-cis-undecaprenyl diphospho-N-acetyl-alpha-D-muramoyl-L-alanyl-D-glutamyl-meso-2,6-diaminopimeloyl-D-alanyl-D-alanine + UMP. It functions in the pathway cell wall biogenesis; peptidoglycan biosynthesis. Its function is as follows. Catalyzes the initial step of the lipid cycle reactions in the biosynthesis of the cell wall peptidoglycan: transfers peptidoglycan precursor phospho-MurNAc-pentapeptide from UDP-MurNAc-pentapeptide onto the lipid carrier undecaprenyl phosphate, yielding undecaprenyl-pyrophosphoryl-MurNAc-pentapeptide, known as lipid I. The polypeptide is Phospho-N-acetylmuramoyl-pentapeptide-transferase (Aliivibrio fischeri (strain MJ11) (Vibrio fischeri)).